The following is a 332-amino-acid chain: o-succinylbenzoate synthase (332 aa).

Lys135 functions as the Proton donor in the catalytic mechanism. Mg(2+) is bound by residues Asp163, Glu192, and Asp215. Catalysis depends on Lys241, which acts as the Proton acceptor.

Belongs to the mandelate racemase/muconate lactonizing enzyme family. MenC type 1 subfamily. A divalent metal cation serves as cofactor.

It catalyses the reaction (1R,6R)-6-hydroxy-2-succinyl-cyclohexa-2,4-diene-1-carboxylate = 2-succinylbenzoate + H2O. The protein operates within quinol/quinone metabolism; 1,4-dihydroxy-2-naphthoate biosynthesis; 1,4-dihydroxy-2-naphthoate from chorismate: step 4/7. Its pathway is quinol/quinone metabolism; menaquinone biosynthesis. Its function is as follows. Converts 2-succinyl-6-hydroxy-2,4-cyclohexadiene-1-carboxylate (SHCHC) to 2-succinylbenzoate (OSB). The polypeptide is o-succinylbenzoate synthase (Vibrio cholerae serotype O1 (strain ATCC 39315 / El Tor Inaba N16961)).